Here is a 360-residue protein sequence, read N- to C-terminus: A-type ATP synthase subunit C (360 aa).

A disordered region spans residues 1-23; that stretch reads MRLLERLWGKKPSRKSDKKKKGT. A compositionally biased stretch (basic residues) spans 9 to 22; the sequence is GKKPSRKSDKKKKG.

This sequence belongs to the V-ATPase V0D/AC39 subunit family. Has multiple subunits with at least A(3), B(3), C, D, E, F, H, I and proteolipid K(x).

It localises to the cell membrane. Functionally, component of the A-type ATP synthase that produces ATP from ADP in the presence of a proton gradient across the membrane. This is A-type ATP synthase subunit C from Methanosarcina acetivorans (strain ATCC 35395 / DSM 2834 / JCM 12185 / C2A).